A 151-amino-acid chain; its full sequence is Prefoldin subunit 5 (151 aa).

A coiled-coil region spans residues 15–35 (IDQLKALKEQADLEVNLLQDS).

It belongs to the prefoldin subunit alpha family. In terms of assembly, heterohexamer of two PFD-alpha type and four PFD-beta type subunits forming prefoldin co-chaperone complex. Interacts with PFD6. Binds to the DELLA protein GAI.

Its subcellular location is the cytoplasm. It localises to the nucleus. Its function is as follows. Binds specifically to cytosolic chaperonin (c-CPN) and transfers target proteins to it. Binds to nascent polypeptide chain and promotes folding in an environment in which there are many competing pathways for nonnative proteins. Together with other chaperonins, contribute to the regulation of gene expression by modulating the spliceosome function on pre-mRNA splicing post-transcriptionally by acting as a co-chaperone of Hsp90 to control levels of LSM8. Required for the biogenesis of tubulins and for subsequent microtubules (MTs) organization and dynamicity. Necessary for tolerance to NaCl salt stress. Involved in the process leading to microtubules dissociation in response to gibberellic acid (GA) probably due to the DELLA proteins-mediated translocation of the prefoldin co-chaperone complex from the cytoplasm to the nucleus. Prevents cold acclimation (e.g. 7 days at 4 degrees Celsius) in a DELLA proteins-dependent manner by promoting nuclear proteasome-mediated HY5 degradation, thus modulating the expression of several genes and reducing anthocyanin biosynthesis, but seems not involved in constitutive freezing tolerance. Contributes to the GA-dependent regulation of PIN2 trafficking at the plasma membrane, thus influencing auxin flux. In Arabidopsis thaliana (Mouse-ear cress), this protein is Prefoldin subunit 5.